The following is a 183-amino-acid chain: Lipocalin (183 aa).

The first 20 residues, methionine 1 to glycine 20, serve as a signal peptide directing secretion. Cysteine 83 and cysteine 179 are joined by a disulfide.

This sequence belongs to the calycin superfamily. Lipocalin family. In terms of assembly, monomer. As to expression, expressed mainly in choroid plexus. Much lower expression in other brain areas, and absent from liver.

The protein localises to the secreted. Might have a transport function across the blood brain barrier. Is supposed to have similar functions as a transthyretin which must have evolved after the stage of the amphibians in evolution. This chain is Lipocalin, found in Rhinella marina (Cane toad).